Consider the following 250-residue polypeptide: 5-oxoprolinase subunit A (250 aa).

Belongs to the LamB/PxpA family. In terms of assembly, forms a complex composed of PxpA, PxpB and PxpC.

The enzyme catalyses 5-oxo-L-proline + ATP + 2 H2O = L-glutamate + ADP + phosphate + H(+). Functionally, catalyzes the cleavage of 5-oxoproline to form L-glutamate coupled to the hydrolysis of ATP to ADP and inorganic phosphate. This chain is 5-oxoprolinase subunit A, found in Staphylococcus aureus (strain NCTC 8325 / PS 47).